The primary structure comprises 503 residues: AMP phosphorylase (503 aa).

Residues glycine 168, 194-199, and threonine 203 contribute to the AMP site; that span reads SRAITS. Aspartate 256 functions as the Proton donor in the catalytic mechanism. AMP-binding residues include serine 264 and lysine 288.

The protein belongs to the thymidine/pyrimidine-nucleoside phosphorylase family. Type 2 subfamily.

It catalyses the reaction AMP + phosphate = alpha-D-ribose 1,5-bisphosphate + adenine. The enzyme catalyses CMP + phosphate = cytosine + alpha-D-ribose 1,5-bisphosphate. The catalysed reaction is UMP + phosphate = alpha-D-ribose 1,5-bisphosphate + uracil. Its function is as follows. Catalyzes the conversion of AMP and phosphate to adenine and ribose 1,5-bisphosphate (R15P). Exhibits phosphorylase activity toward CMP and UMP in addition to AMP. Functions in an archaeal AMP degradation pathway, together with R15P isomerase and RubisCO. This chain is AMP phosphorylase, found in Pyrococcus horikoshii (strain ATCC 700860 / DSM 12428 / JCM 9974 / NBRC 100139 / OT-3).